Consider the following 505-residue polypeptide: Alkylglycerol monooxygenase (505 aa).

2 consecutive transmembrane segments (helical) span residues 56–76 and 104–124; these read VSAW…ISGH and AVAI…ELPW. Residues 130-262 form the Fatty acid hydroxylase domain; sequence WIFCLFFQDF…FIIWDKMFNT (133 aa). Positions 145–149 match the Histidine box-1 motif; the sequence is HRAVH. Positions 158 to 162 match the Histidine box-2 motif; it reads HTIHH. Residues 234-238 carry the Histidine box-3 motif; that stretch reads HRVHH. The next 4 helical transmembrane spans lie at 366 to 386, 396 to 416, 430 to 450, and 452 to 472; these read ILVK…FFHF, LDCT…GAFF, CCGV…AGTH, and LFVI…VLVE.

The protein belongs to the sterol desaturase family. TMEM195 subfamily. Requires Fe cation as cofactor.

The protein localises to the endoplasmic reticulum membrane. The enzyme catalyses 1-O-(1,2-saturated-alkyl)-sn-glycerol + (6R)-L-erythro-5,6,7,8-tetrahydrobiopterin + O2 = a 1-(1-hydroxyalkyl)-sn-glycerol + (6R)-L-erythro-6,7-dihydrobiopterin + H2O. Glyceryl-ether monooxygenase that cleaves the O-alkyl bond of ether lipids. The chain is Alkylglycerol monooxygenase from Caenorhabditis elegans.